Consider the following 440-residue polypeptide: Transposon Ty1-PR2 Gag polyprotein (440 aa).

Polar residues-rich tracts occupy residues 1-10 (MESQQLSNYP), 48-60 (TKAN…TPAS), and 127-152 (QSQF…GNTF). Disordered regions lie at residues 1–93 (MESQ…MMTQ), 126–173 (PQSQ…RPPP), and 352–440 (GSRN…PETY). The segment covering 153–165 (TDSSSADSDMTST) has biased composition (low complexity). The RNA-binding stretch occupies residues 299–401 (NNGIHINNKV…NSKSKTARAH (103 aa)). The span at 402-418 (NVSTSNNSPSTDNDSIS) shows a compositional bias: low complexity. Position 416 is a phosphoserine (serine 416). A compositionally biased stretch (polar residues) spans 419–428 (KSTTEPIQLN). The segment covering 429–440 (NKHDLHLRPETY) has biased composition (basic and acidic residues).

Homotrimer.

The protein resides in the cytoplasm. In terms of biological role, capsid protein (CA) is the structural component of the virus-like particle (VLP), forming the shell that encapsulates the retrotransposons dimeric RNA genome. The particles are assembled from trimer-clustered units and there are holes in the capsid shells that allow for the diffusion of macromolecules. CA also has nucleocapsid-like chaperone activity, promoting primer tRNA(i)-Met annealing to the multipartite primer-binding site (PBS), dimerization of Ty1 RNA and initiation of reverse transcription. This is Transposon Ty1-PR2 Gag polyprotein (TY1A-PR2) from Saccharomyces cerevisiae (strain ATCC 204508 / S288c) (Baker's yeast).